An 885-amino-acid chain; its full sequence is Sensor histidine kinase KdpD (885 aa).

The next 4 helical transmembrane spans lie at 384–404 (AIDM…GLWI), 415–435 (IILM…RSFI), 436–456 (IGFL…TEPR), and 464–484 (FDYP…SALL). Residues 660–880 (SISHDIRTPL…IFYFNIYTDF (221 aa)) form the Histidine kinase domain. At histidine 663 the chain carries Phosphohistidine; by autocatalysis.

The protein resides in the membrane. It catalyses the reaction ATP + protein L-histidine = ADP + protein N-phospho-L-histidine.. With respect to regulation, cyclic di-AMP is a negative regulator of the Kdp system. Member of the two-component regulatory system KdpD/KdpE that regulates the transcription of a series of virulence factors through sensing external K(+) concentrations. Also regulates capsular polysaccharide production. May function as a membrane-associated protein kinase that phosphorylates KdpE in response to environmental signals. In turn, KpdE functions as a transcriptional regulator by direct binding to promoter regions of target genes including spa, hla, aur and geh. This chain is Sensor histidine kinase KdpD, found in Staphylococcus aureus (strain NCTC 8325 / PS 47).